We begin with the raw amino-acid sequence, 255 residues long: Proteasome subunit alpha type-3 (255 aa).

S2 bears the N-acetylserine mark. An N6-acetyllysine mark is found at K57, K206, and K230. 2 positions are modified to phosphoserine: S243 and S250.

The protein belongs to the peptidase T1A family. The 26S proteasome consists of a 20S proteasome core and two 19S regulatory subunits. The 20S proteasome core is a barrel-shaped complex made of 28 subunits that are arranged in four stacked rings. The two outer rings are each formed by seven alpha subunits, and the two inner rings are formed by seven beta subunits. The proteolytic activity is exerted by three beta-subunits PSMB5, PSMB6 and PSMB7. Interacts with AURKB. Interacts with CDKN1A. Interacts with MDM2 and RB1. Interacts with the C-terminus of TBXA2R isoform 2. Interacts with DNAJB2.

Its subcellular location is the cytoplasm. It is found in the nucleus. Functionally, component of the 20S core proteasome complex involved in the proteolytic degradation of most intracellular proteins. This complex plays numerous essential roles within the cell by associating with different regulatory particles. Associated with two 19S regulatory particles, forms the 26S proteasome and thus participates in the ATP-dependent degradation of ubiquitinated proteins. The 26S proteasome plays a key role in the maintenance of protein homeostasis by removing misfolded or damaged proteins that could impair cellular functions, and by removing proteins whose functions are no longer required. Associated with the PA200 or PA28, the 20S proteasome mediates ubiquitin-independent protein degradation. This type of proteolysis is required in several pathways including spermatogenesis (20S-PA200 complex) or generation of a subset of MHC class I-presented antigenic peptides (20S-PA28 complex). Binds to the C-terminus of CDKN1A and thereby mediates its degradation. Negatively regulates the membrane trafficking of the cell-surface thromboxane A2 receptor (TBXA2R) isoform 2. The polypeptide is Proteasome subunit alpha type-3 (PSMA3) (Bos taurus (Bovine)).